A 426-amino-acid chain; its full sequence is MITGSEVYQVVEAMAPLYTAAALGYGSVRWLKAFSNEQCAGINHFVALYAVPVLIFDMVSTNNVYKMNGRLIAADTLQKAVLLLGLMAWALWERSRARGAGAKAKAAVSSPLQWVITCFSVASLPNTIIMGVPLLNGMYGPVSKDLMKQIVVMQFCIWYNVIIFLYEYMAARRSASAPPPASSEGSAKISPSSPVKAAAAAADTNGNAVAADRPQEVAVNIEITEMAASTARDGVSGETTAAAKEVSSGEVAPVEEEEASAPAPSMKHVIWMAVKKLLQIPNTYASFLGLIWSLIAFKCGFSMPKIVEDSLFTIRTTAVGLSMFSSGTFIARQSRFVPCGYKIASFSMVIKFLIGPVVMLFASLVIGMHGTLLHIAVVQAALPLAVTSFVYAEEYKVHADIMSTGVILGIFISLPVTIVYYILLGL.

Over 1–6 (MITGSE) the chain is Extracellular. The chain crosses the membrane as a helical span at residues 7-27 (VYQVVEAMAPLYTAAALGYGS). Residues 28–38 (VRWLKAFSNEQ) are Cytoplasmic-facing. A helical transmembrane segment spans residues 39 to 59 (CAGINHFVALYAVPVLIFDMV). Val-51 is a binding site for (indol-3-yl)acetate. At 60–70 (STNNVYKMNGR) the chain is on the extracellular side. The helical transmembrane segment at 71-91 (LIAADTLQKAVLLLGLMAWAL) threads the bilayer. Residues 92-114 (WERSRARGAGAKAKAAVSSPLQW) lie on the Cytoplasmic side of the membrane. Residues 115 to 135 (VITCFSVASLPNTIIMGVPLL) form a helical membrane-spanning segment. (indol-3-yl)acetate is bound by residues Asn-126 and Ile-128. Residues 136–145 (NGMYGPVSKD) lie on the Extracellular side of the membrane. A helical membrane pass occupies residues 146-166 (LMKQIVVMQFCIWYNVIIFLY). Residue Tyr-159 coordinates (indol-3-yl)acetate. The Cytoplasmic segment spans residues 167-286 (EYMAARRSAS…LLQIPNTYAS (120 aa)). The tract at residues 232–258 (RDGVSGETTAAAKEVSSGEVAPVEEEE) is disordered. A helical transmembrane segment spans residues 287–307 (FLGLIWSLIAFKCGFSMPKIV). Topologically, residues 308 to 310 (EDS) are extracellular. Residues 311–331 (LFTIRTTAVGLSMFSSGTFIA) traverse the membrane as a helical segment. The Cytoplasmic portion of the chain corresponds to 332 to 347 (RQSRFVPCGYKIASFS). The chain crosses the membrane as a helical span at residues 348-368 (MVIKFLIGPVVMLFASLVIGM). Residues 369-371 (HGT) lie on the Extracellular side of the membrane. The helical transmembrane segment at 372-392 (LLHIAVVQAALPLAVTSFVYA) threads the bilayer. Position 386 (Val-386) interacts with (indol-3-yl)acetate. At 393–405 (EEYKVHADIMSTG) the chain is on the cytoplasmic side. Residues 406–426 (VILGIFISLPVTIVYYILLGL) form a helical membrane-spanning segment.

Belongs to the auxin efflux carrier (TC 2.A.69.1) family. Homodimer. As to expression, expressed in roots, leaves and shoot apex. Expressed in roots, stem bases, stems, leaves and young panicles.

Its subcellular location is the membrane. Functionally, may act as a component of the auxin efflux carrier. The sequence is that of Probable auxin efflux carrier component 9 from Oryza sativa subsp. japonica (Rice).